The sequence spans 284 residues: 2-dehydro-3-deoxyphosphooctonate aldolase (284 aa).

This sequence belongs to the KdsA family.

The protein localises to the cytoplasm. The enzyme catalyses D-arabinose 5-phosphate + phosphoenolpyruvate + H2O = 3-deoxy-alpha-D-manno-2-octulosonate-8-phosphate + phosphate. It participates in carbohydrate biosynthesis; 3-deoxy-D-manno-octulosonate biosynthesis; 3-deoxy-D-manno-octulosonate from D-ribulose 5-phosphate: step 2/3. Its pathway is bacterial outer membrane biogenesis; lipopolysaccharide biosynthesis. The sequence is that of 2-dehydro-3-deoxyphosphooctonate aldolase from Glaesserella parasuis serovar 5 (strain SH0165) (Haemophilus parasuis).